The following is a 39-amino-acid chain: Cygnin (39 aa).

Glutamine 1 carries the post-translational modification Pyrrolidone carboxylic acid. 3 disulfide bridges follow: cysteine 6–cysteine 33, cysteine 12–cysteine 28, and cysteine 16–cysteine 32.

This sequence belongs to the transferrin family.

The chain is Cygnin from Cygnus atratus (Black swan).